The chain runs to 365 residues: Probable ethanolamine-phosphate cytidylyltransferase (365 aa).

A disordered region spans residues 344–365 (EERQRRKMGKNATEQTTIKTYA). Positions 355 to 365 (ATEQTTIKTYA) are enriched in polar residues.

Belongs to the cytidylyltransferase family.

It carries out the reaction phosphoethanolamine + CTP + H(+) = CDP-ethanolamine + diphosphate. Its pathway is phospholipid metabolism; phosphatidylethanolamine biosynthesis; phosphatidylethanolamine from ethanolamine: step 2/3. This Schizosaccharomyces pombe (strain 972 / ATCC 24843) (Fission yeast) protein is Probable ethanolamine-phosphate cytidylyltransferase.